The sequence spans 265 residues: Chlorophyll a-b binding protein 1A, chloroplastic (265 aa).

The N-terminal 34 residues, 1-34 (MAAAAMALSSPSFAGQAVKLSPSASENSGNGRIT), are a transit peptide targeting the chloroplast. The chain crosses the membrane as a helical span at residues 151–171 (LVHAQSILAIWACQVVLMGAV). Val152, Ser156, Gln164, Glu172, Arg175, and Leu181 together coordinate chlorophyll b. 7 residues coordinate chlorophyll a: Lys212, Glu213, Asn216, Arg218, Gln230, His245, and Ala254. The helical transmembrane segment at 219–239 (LAMFSMFGFFVQAIVTGKGPL) threads the bilayer. A chlorophyll b-binding site is contributed by Phe261.

This sequence belongs to the light-harvesting chlorophyll a/b-binding (LHC) protein family. As to quaternary structure, the LHC complex consists of chlorophyll a-b binding proteins. The cofactor is Binds at least 14 chlorophylls (8 Chl-a and 6 Chl-b) and carotenoids such as lutein and neoxanthin.. In terms of processing, photoregulated by reversible phosphorylation of its threonine residues.

It localises to the plastid. The protein localises to the chloroplast thylakoid membrane. Its function is as follows. The light-harvesting complex (LHC) functions as a light receptor, it captures and delivers excitation energy to photosystems with which it is closely associated. In Solanum lycopersicum (Tomato), this protein is Chlorophyll a-b binding protein 1A, chloroplastic (CAB1A).